Reading from the N-terminus, the 146-residue chain is Large ribosomal subunit protein uL11 (146 aa).

Belongs to the universal ribosomal protein uL11 family. In terms of assembly, part of the ribosomal stalk of the 50S ribosomal subunit. Interacts with L10 and the large rRNA to form the base of the stalk. L10 forms an elongated spine to which L12 dimers bind in a sequential fashion forming a multimeric L10(L12)X complex. Post-translationally, one or more lysine residues are methylated.

Functionally, forms part of the ribosomal stalk which helps the ribosome interact with GTP-bound translation factors. This is Large ribosomal subunit protein uL11 from Salinibacter ruber (strain DSM 13855 / M31).